Consider the following 520-residue polypeptide: GMP synthase [glutamine-hydrolyzing] (520 aa).

Positions 13-205 (KIIVLDYGSQ…ALNICKAKGD (193 aa)) constitute a Glutamine amidotransferase type-1 domain. Residue Cys-90 is the Nucleophile of the active site. Residues His-179 and Glu-181 contribute to the active site. Residues 206–395 (WSMDNFIDMQ…LGMPDHIVWR (190 aa)) form the GMPS ATP-PPase domain. 233–239 (SGGVDSS) is an ATP binding site.

In terms of assembly, homodimer.

The catalysed reaction is XMP + L-glutamine + ATP + H2O = GMP + L-glutamate + AMP + diphosphate + 2 H(+). It participates in purine metabolism; GMP biosynthesis; GMP from XMP (L-Gln route): step 1/1. Catalyzes the synthesis of GMP from XMP. In Streptococcus pneumoniae serotype 2 (strain D39 / NCTC 7466), this protein is GMP synthase [glutamine-hydrolyzing].